The sequence spans 359 residues: Nicotinate-nucleotide--dimethylbenzimidazole phosphoribosyltransferase (359 aa).

E318 functions as the Proton acceptor in the catalytic mechanism.

This sequence belongs to the CobT family. Homodimer.

It carries out the reaction 5,6-dimethylbenzimidazole + nicotinate beta-D-ribonucleotide = alpha-ribazole 5'-phosphate + nicotinate + H(+). The protein operates within nucleoside biosynthesis; alpha-ribazole biosynthesis; alpha-ribazole from 5,6-dimethylbenzimidazole: step 1/2. Catalyzes the synthesis of alpha-ribazole-5'-phosphate from nicotinate mononucleotide (NAMN) and 5,6-dimethylbenzimidazole (DMB). The sequence is that of Nicotinate-nucleotide--dimethylbenzimidazole phosphoribosyltransferase from Shigella flexneri serotype 5b (strain 8401).